A 217-amino-acid chain; its full sequence is Casparian strip membrane protein 6 (217 aa).

Topologically, residues 1–57 are cytoplasmic; the sequence is MEEAKHIEAVEAKQIEAEEAQRIKAGEAKQIEAGETSRSSRKVITFEPKLVINKGIS. Residues 58–78 traverse the membrane as a helical segment; it reads VLGFVLRLFAVFGTIGSALAM. The Extracellular segment spans residues 79–103; sequence GTTHESVVSLSQLVLLKVKYSDLPT. A helical membrane pass occupies residues 104–124; sequence LMFFVVANAIAGGYLVLSLPV. Residues 125–138 are Cytoplasmic-facing; it reads SIFHIFSTKAKTSR. Residues 139–159 form a helical membrane-spanning segment; it reads IILLVIDTVMLALVSSGASAA. The Extracellular segment spans residues 160–191; sequence TATVYLAHEGNTTANWPPICQQFDGFCERISG. The N-linked (GlcNAc...) asparagine glycan is linked to Asn170. A helical transmembrane segment spans residues 192–212; it reads SLIGSFCAVILLMLIVINSAI. Residues 213–217 lie on the Cytoplasmic side of the membrane; sequence SLSRH.

It belongs to the Casparian strip membrane proteins (CASP) family. Homodimer and heterodimers.

It localises to the cell membrane. Its function is as follows. Regulates membrane-cell wall junctions and localized cell wall deposition. Required for establishment of the Casparian strip membrane domain (CSD) and the subsequent formation of Casparian strips, a cell wall modification of the root endodermis that determines an apoplastic barrier between the intraorganismal apoplasm and the extraorganismal apoplasm and prevents lateral diffusion. The sequence is that of Casparian strip membrane protein 6 from Arabidopsis lyrata subsp. lyrata (Lyre-leaved rock-cress).